We begin with the raw amino-acid sequence, 103 residues long: Cell division suppressor protein YneA (103 aa).

Residues 36–87 form the LysM domain; sequence VKIEVQSGDTLWGLADQVNDSKSIDKNAFIDWVTQHNDLASTEIQPGDILVI.

It belongs to the YneA family.

Its subcellular location is the cytoplasm. In terms of biological role, inhibits cell division during the SOS response. Affects a later stage of the cell division protein assembly, after the assembly of the Z ring, by probably suppressing recruitment of FtsL and/or DivIC to the division machinery. The protein is Cell division suppressor protein YneA of Bacillus pumilus (strain SAFR-032).